A 225-amino-acid polypeptide reads, in one-letter code: UPF0758 protein BcerKBAB4_4299 (225 aa).

The MPN domain occupies 103–225; sequence SIRSPEDCAS…FVSLKEKGHI (123 aa). The Zn(2+) site is built by His174, His176, and Asp187. Positions 174-187 match the JAMM motif motif; that stretch reads HNHPSGDPAPSRED.

It belongs to the UPF0758 family.

This chain is UPF0758 protein BcerKBAB4_4299, found in Bacillus mycoides (strain KBAB4) (Bacillus weihenstephanensis).